The sequence spans 603 residues: Myotubularin (603 aa).

Phosphoserine is present on residues serine 13 and serine 18. Residues 29–97 (QDVSETVPRL…GVISRIEKMG (69 aa)) form the GRAM domain. The 376-residue stretch at 163–538 (GWTVYNPVEE…RHLELWVNYY (376 aa)) folds into the Myotubularin phosphatase domain. Asparagine 288, asparagine 313, and isoleucine 314 together coordinate a 1,2-diacyl-sn-glycero-3-phospho-(1D-myo-inositol-3,5-bisphosphate). A 1,2-diacyl-sn-glycero-3-phospho-(1D-myo-inositol-3-phosphate) contacts are provided by asparagine 288, asparagine 313, and isoleucine 314. Cysteine 375 acts as the Phosphocysteine intermediate in catalysis. Serine 376, aspartate 377, glycine 378, tryptophan 379, aspartate 380, arginine 381, lysine 417, and arginine 421 together coordinate a 1,2-diacyl-sn-glycero-3-phospho-(1D-myo-inositol-3,5-bisphosphate). 6 residues coordinate a 1,2-diacyl-sn-glycero-3-phospho-(1D-myo-inositol-3-phosphate): serine 376, aspartate 377, glycine 378, tryptophan 379, aspartate 380, and arginine 381. A 1,2-diacyl-sn-glycero-3-phospho-(1D-myo-inositol-3-phosphate) is bound at residue arginine 421. Residue threonine 495 is modified to Phosphothreonine. Position 588 is a phosphoserine (serine 588).

The protein belongs to the protein-tyrosine phosphatase family. Non-receptor class myotubularin subfamily. In terms of assembly, heterodimer with MTMR12. Interacts with KMT2A/MLL1 (via SET domain). Interacts with DES in skeletal muscle but not in cardiac muscle. Interacts with SPEG. Widely expressed with highest levels detected in heart and muscle and low levels in brain (at protein level). Expressed in skeletal muscles (at protein level).

The protein localises to the cytoplasm. It localises to the cell membrane. Its subcellular location is the cell projection. The protein resides in the filopodium. It is found in the ruffle. The protein localises to the late endosome. It localises to the myofibril. Its subcellular location is the sarcomere. The enzyme catalyses a 1,2-diacyl-sn-glycero-3-phospho-(1D-myo-inositol-3-phosphate) + H2O = a 1,2-diacyl-sn-glycero-3-phospho-(1D-myo-inositol) + phosphate. The catalysed reaction is a 1,2-diacyl-sn-glycero-3-phospho-(1D-myo-inositol-3,5-bisphosphate) + H2O = a 1,2-diacyl-sn-glycero-3-phospho-(1D-myo-inositol-5-phosphate) + phosphate. It catalyses the reaction 1,2-dioctanoyl-sn-glycero-3-phospho-(1-D-myo-inositol-3-phosphate) + H2O = 1,2-dioctanoyl-sn-glycero-3-phospho-(1D-myo-inositol) + phosphate. It carries out the reaction 1,2-dioctanoyl-sn-glycero-3-phospho-(1D-myo-inositol-3,5-bisphosphate) + H2O = 1,2-dioctanoyl-sn-glycero-3-phospho-(1D-myo-inositol-5-phosphate) + phosphate. The enzyme catalyses 1,2-dihexadecanoyl-sn-glycero-3-phospho-(1D-myo-inositol-3,5-phosphate) + H2O = 1,2-dihexadecanoyl-sn-glycero-3-phospho-(1D-myo-inositol-5-phosphate) + phosphate. Its activity is regulated as follows. Allosterically activated by phosphatidylinositol 5-phosphate (PI5P). Its function is as follows. Lipid phosphatase which dephosphorylates phosphatidylinositol 3-monophosphate (PI3P) and phosphatidylinositol 3,5-bisphosphate (PI(3,5)P2). Has also been shown to dephosphorylate phosphotyrosine- and phosphoserine-containing peptides. Negatively regulates EGFR degradation through regulation of EGFR trafficking from the late endosome to the lysosome. Plays a role in vacuolar formation and morphology. Regulates desmin intermediate filament assembly and architecture. Plays a role in mitochondrial morphology and positioning. Required for skeletal muscle maintenance but not for myogenesis. In skeletal muscles, stabilizes MTMR12 protein levels. In Mus musculus (Mouse), this protein is Myotubularin.